A 539-amino-acid chain; its full sequence is Chaperonin GroEL (539 aa).

Residues 29–32 (TLGP), 86–90 (DGTTT), glycine 413, 476–478 (NAA), and aspartate 492 each bind ATP.

It belongs to the chaperonin (HSP60) family. Forms a cylinder of 14 subunits composed of two heptameric rings stacked back-to-back. Interacts with the co-chaperonin GroES.

The protein resides in the cytoplasm. It catalyses the reaction ATP + H2O + a folded polypeptide = ADP + phosphate + an unfolded polypeptide.. In terms of biological role, together with its co-chaperonin GroES, plays an essential role in assisting protein folding. The GroEL-GroES system forms a nano-cage that allows encapsulation of the non-native substrate proteins and provides a physical environment optimized to promote and accelerate protein folding. The sequence is that of Chaperonin GroEL from Parageobacillus thermoglucosidasius (Geobacillus thermoglucosidasius).